Consider the following 150-residue polypeptide: UPF0178 protein PSEEN5341 (150 aa).

It belongs to the UPF0178 family.

The sequence is that of UPF0178 protein PSEEN5341 from Pseudomonas entomophila (strain L48).